Here is a 694-residue protein sequence, read N- to C-terminus: Glycine--tRNA ligase beta subunit (694 aa).

It belongs to the class-II aminoacyl-tRNA synthetase family. In terms of assembly, tetramer of two alpha and two beta subunits.

The protein localises to the cytoplasm. The enzyme catalyses tRNA(Gly) + glycine + ATP = glycyl-tRNA(Gly) + AMP + diphosphate. This is Glycine--tRNA ligase beta subunit from Lactiplantibacillus plantarum (strain ATCC BAA-793 / NCIMB 8826 / WCFS1) (Lactobacillus plantarum).